Here is a 248-residue protein sequence, read N- to C-terminus: Myelin protein P0 (248 aa).

Positions Met1–Gln28 are cleaved as a signal peptide. Over Ala29 to Gly155 the chain is Extracellular. An Ig-like V-type domain is found at Ile30 to Thr143. Residues Cys50 and Cys127 are joined by a disulfide bond. N-linked (GlcNAc...) (complex) asparagine glycosylation occurs at Asn122. The helical transmembrane segment at Val156–Phe176 threads the bilayer. Over Tyr177–Lys248 the chain is Cytoplasmic. Ser210 bears the Phosphoserine; by PKC mark. A disordered region spans residues Asp224–Lys248. A phosphoserine mark is found at Ser226 and Ser228. Ser233 and Ser243 each carry phosphoserine; by PKC.

It belongs to the myelin P0 protein family. Homodimer and homotetramer. N-glycosylated; contains sulfate-substituted glycan. In terms of tissue distribution, found only in peripheral nervous system Schwann cells.

The protein localises to the cell membrane. Its function is as follows. Is an adhesion molecule necessary for normal myelination in the peripheral nervous system. It mediates adhesion between adjacent myelin wraps and ultimately drives myelin compaction. The sequence is that of Myelin protein P0 (MPZ) from Bos taurus (Bovine).